We begin with the raw amino-acid sequence, 776 residues long: Calcium-independent phospholipase A2-gamma (776 aa).

2 stretches are compositionally biased toward basic and acidic residues: residues 226-238 (RQLQ…EESK) and 307-331 (LKSD…ICKD). Disordered stretches follow at residues 226–274 (RQLQ…EALP) and 306–331 (KLKS…ICKD). The region spanning 439-634 (LAIDGGGTRG…LLNNPSALAL (196 aa)) is the PNPLA domain. The short motif at 443 to 448 (GGGTRG) is the GXGXXG element. The chain crosses the membrane as a helical span at residues 469 to 489 (LFDYICGVSTGAILAFMLGLF). The GXSXG signature appears at 475 to 479 (GVSTG). Catalysis depends on Ser477, which acts as the Nucleophile. The Proton acceptor role is filled by Asp621. A DGA/G motif is present at residues 621 to 623 (DGG). An N6-succinyllysine modification is found at Lys730.

The protein resides in the endoplasmic reticulum membrane. It localises to the microsome membrane. It is found in the mitochondrion membrane. Its subcellular location is the peroxisome membrane. The enzyme catalyses a 1,2-diacyl-sn-glycero-3-phosphocholine + H2O = a 1-acyl-sn-glycero-3-phosphocholine + a fatty acid + H(+). It carries out the reaction a 1,2-diacyl-sn-glycero-3-phosphocholine + H2O = a 2-acyl-sn-glycero-3-phosphocholine + a fatty acid + H(+). The catalysed reaction is a 1,2-diacyl-sn-glycero-3-phosphoethanolamine + H2O = a 1-acyl-sn-glycero-3-phosphoethanolamine + a fatty acid + H(+). It catalyses the reaction a 1-O-(1Z-alkenyl)-2-acyl-sn-glycero-3-phosphocholine + H2O = a 1-O-(1Z-alkenyl)-sn-glycero-3-phosphocholine + a fatty acid + H(+). The enzyme catalyses a 1-acyl-sn-glycero-3-phosphocholine + H2O = sn-glycerol 3-phosphocholine + a fatty acid + H(+). It carries out the reaction 1-acyl-2-(9Z,12Z)-octadecadienoyl-sn-glycero-3-phosphocholine + H2O = a 1-acyl-sn-glycero-3-phosphocholine + (9Z,12Z)-octadecadienoate + H(+). The catalysed reaction is 1-acyl-2-(5Z,8Z,11Z,14Z-eicosatetraenoyl)-sn-glycero-3-phosphocholine + H2O = a 1-acyl-sn-glycero-3-phosphocholine + (5Z,8Z,11Z,14Z)-eicosatetraenoate + H(+). It catalyses the reaction 1-hexadecanoyl-2-(5Z,8Z,11Z,14Z-eicosatetraenoyl)-sn-glycero-3-phosphocholine + H2O = 1-hexadecanoyl-sn-glycero-3-phosphocholine + (5Z,8Z,11Z,14Z)-eicosatetraenoate + H(+). The enzyme catalyses 1-octadecanoyl-2-(9Z-octadecenoyl)-sn-glycero-3-phosphocholine + H2O = 1-octadecanoyl-sn-glycero-3-phosphocholine + (9Z)-octadecenoate + H(+). It carries out the reaction 1-hexadecanoyl-2-(9Z-octadecenoyl)-sn-glycero-3-phosphocholine + H2O = 1-hexadecanoyl-sn-glycero-3-phosphocholine + (9Z)-octadecenoate + H(+). The catalysed reaction is 1-hexadecanoyl-2-(9Z,12Z-octadecadienoyl)-sn-glycero-3-phosphocholine + H2O = (9Z,12Z)-octadecadienoate + 1-hexadecanoyl-sn-glycero-3-phosphocholine + H(+). It catalyses the reaction 1-acyl-2-(9Z,12Z)-octadecadienoyl-sn-glycero-3-phosphoethanolamine + H2O = a 1-acyl-sn-glycero-3-phosphoethanolamine + (9Z,12Z)-octadecadienoate + H(+). The enzyme catalyses 1-acyl-2-(5Z,8Z,11Z,14Z)-eicosatetraenoyl-sn-glycero-3-phosphoethanolamine + H2O = a 1-acyl-sn-glycero-3-phosphoethanolamine + (5Z,8Z,11Z,14Z)-eicosatetraenoate + H(+). It carries out the reaction 1-hexadecanoyl-2-(5Z,8Z,11Z,14Z-eicosatetraenoyl)-sn-glycero-3-phosphoethanolamine + H2O = 1-hexadecanoyl-sn-glycero-3-phosphoethanolamine + (5Z,8Z,11Z,14Z)-eicosatetraenoate + H(+). The catalysed reaction is 1-hexadecanoyl-2-(5Z,8Z,11Z,14Z-eicosatetraenoyl)-sn-glycero-3-phosphocholine + H2O = 2-(5Z,8Z,11Z,14Z)-eicosatetraenoyl-sn-glycero-3-phosphocholine + hexadecanoate + H(+). It catalyses the reaction 1-octadecanoyl-2-(9Z-octadecenoyl)-sn-glycero-3-phosphocholine + H2O = 2-(9Z-octadecenoyl)-sn-glycero-3-phosphocholine + octadecanoate + H(+). The enzyme catalyses 1-hexadecanoyl-2-(4Z,7Z,10Z,13Z,16Z,19Z-docosahexaenoyl)-sn-glycero-3-phosphocholine + H2O = 2-(4Z,7Z,10Z,13Z,16Z,19Z-docosahexaenoyl)-sn-glycero-3-phosphocholine + hexadecanoate + H(+). It carries out the reaction 1-O-(1Z)-hexadecenyl-2 (5Z,8Z,11Z,14Z)-eicosatetraenoyl-sn-glycero-3-phosphocholine + H2O = 1-(1Z-hexadecenyl)-sn-glycero-3-phosphocholine + (5Z,8Z,11Z,14Z)-eicosatetraenoate + H(+). The catalysed reaction is 1-O-(1Z-hexadecenyl)-2-(9Z-octadecenoyl)-sn-glycero-3-phosphocholine + H2O = 1-(1Z-hexadecenyl)-sn-glycero-3-phosphocholine + (9Z)-octadecenoate + H(+). It catalyses the reaction 1-hexadecanoyl-sn-glycero-3-phosphocholine + H2O = sn-glycerol 3-phosphocholine + hexadecanoate + H(+). The enzyme catalyses 1',3'-bis-[1,2-di-(9Z,12Z-octadecadienoyl)-sn-glycero-3-phospho]-glycerol + H2O = 1'-[1,2-di-(9Z,12Z-octadecadienoyl)-sn-glycero-3-phospho]-3'-[1-(9Z,12Z-octadecadienoyl)-sn-glycero-3-phospho]-glycerol + (9Z,12Z)-octadecadienoate + H(+). It carries out the reaction 1'-[1-acyl-2-(9-hydroxy-(10E,12Z)-octadecadienoyl)-sn-glycero-3-phospho]-3'-[1,2-diacyl-sn-glycero-3-phospho]-glycerol + H2O = 9-hydroxy-(10E,12Z)-octadecadienoate + 1'-[1,2-diacyl-sn-glycero-3-phospho],3'-[1-acyl-sn-glycero-3-phospho]-glycerol + H(+). The protein operates within phospholipid metabolism. Its activity is regulated as follows. Calcium-independent phospholipase. Calcium-independent and membrane-bound phospholipase, that catalyzes the esterolytic cleavage of fatty acids from glycerophospholipids to yield free fatty acids and lysophospholipids, hence regulating membrane physical properties and the release of lipid second messengers and growth factors. Hydrolyzes phosphatidylethanolamine, phosphatidylcholine and probably phosphatidylinositol with a possible preference for the former. Has also a broad substrate specificity in terms of fatty acid moieties, hydrolyzing saturated and mono-unsaturated fatty acids at nearly equal rates from either the sn-1 or sn-2 position in diacyl phosphatidylcholine. However, has a weak activity toward polyunsaturated fatty acids at the sn-2 position, and thereby favors the production of 2-arachidonoyl lysophosphatidylcholine, a key branch point metabolite in eicosanoid signaling. On the other hand, can produce arachidonic acid from the sn-1 position of diacyl phospholipid and from the sn-2 position of arachidonate-containing plasmalogen substrates. Therefore, plays an important role in the mobilization of arachidonic acid in response to cellular stimuli and the generation of lipid second messengers. Can also hydrolyze lysophosphatidylcholine. In the mitochondrial compartment, catalyzes the hydrolysis and release of oxidized aliphatic chains from cardiolipin and integrates mitochondrial bioenergetics and signaling. It is essential for maintaining efficient bioenergetic mitochondrial function through tailoring mitochondrial membrane lipid metabolism and composition. This is Calcium-independent phospholipase A2-gamma from Rattus norvegicus (Rat).